The following is a 365-amino-acid chain: DNA replication and repair protein RecF (365 aa).

An ATP-binding site is contributed by 30–37; it reads GLNGSGKT.

Belongs to the RecF family.

The protein resides in the cytoplasm. The RecF protein is involved in DNA metabolism; it is required for DNA replication and normal SOS inducibility. RecF binds preferentially to single-stranded, linear DNA. It also seems to bind ATP. This Cellvibrio japonicus (strain Ueda107) (Pseudomonas fluorescens subsp. cellulosa) protein is DNA replication and repair protein RecF.